Consider the following 319-residue polypeptide: Acetyl-coenzyme A carboxylase carboxyl transferase subunit alpha (319 aa).

Positions 35–296 constitute a CoA carboxyltransferase C-terminal domain; it reads NIDEEVHRLR…KAQLLADLAD (262 aa).

It belongs to the AccA family. As to quaternary structure, acetyl-CoA carboxylase is a heterohexamer composed of biotin carboxyl carrier protein (AccB), biotin carboxylase (AccC) and two subunits each of ACCase subunit alpha (AccA) and ACCase subunit beta (AccD).

It localises to the cytoplasm. The catalysed reaction is N(6)-carboxybiotinyl-L-lysyl-[protein] + acetyl-CoA = N(6)-biotinyl-L-lysyl-[protein] + malonyl-CoA. It participates in lipid metabolism; malonyl-CoA biosynthesis; malonyl-CoA from acetyl-CoA: step 1/1. Component of the acetyl coenzyme A carboxylase (ACC) complex. First, biotin carboxylase catalyzes the carboxylation of biotin on its carrier protein (BCCP) and then the CO(2) group is transferred by the carboxyltransferase to acetyl-CoA to form malonyl-CoA. This chain is Acetyl-coenzyme A carboxylase carboxyl transferase subunit alpha, found in Escherichia coli O139:H28 (strain E24377A / ETEC).